Consider the following 127-residue polypeptide: Apolipoprotein C-IV (127 aa).

The signal sequence occupies residues 1–27 (MSLLRNRLQALPALCLCVLVLACIGAC). A glycan (N-linked (GlcNAc...) asparagine) is linked at Asn-63.

Belongs to the apolipoprotein C4 family. As to expression, expressed by the liver and secreted in plasma.

It is found in the secreted. Functionally, may participate in lipoprotein metabolism. The chain is Apolipoprotein C-IV (APOC4) from Homo sapiens (Human).